The chain runs to 464 residues: Cysteine--tRNA ligase (464 aa).

Cys32 is a Zn(2+) binding site. The 'HIGH' region signature appears at 34–44; sequence VTVYDDCHIGH. Positions 213, 238, and 242 each coordinate Zn(2+). Positions 270 to 274 match the 'KMSKS' region motif; the sequence is KMSKS. Residue Lys273 coordinates ATP.

It belongs to the class-I aminoacyl-tRNA synthetase family. In terms of assembly, monomer. Zn(2+) serves as cofactor.

It localises to the cytoplasm. The catalysed reaction is tRNA(Cys) + L-cysteine + ATP = L-cysteinyl-tRNA(Cys) + AMP + diphosphate. In Francisella tularensis subsp. tularensis (strain SCHU S4 / Schu 4), this protein is Cysteine--tRNA ligase.